Consider the following 330-residue polypeptide: Mas-related G-protein coupled receptor member X2 (330 aa).

The Extracellular segment spans residues 1–33; the sequence is MDPTTPAWGTESTTMNGNDQALPLLCGKETLIL. A helical membrane pass occupies residues 34-54; sequence VLLILFIALVGLVGNAFVLWL. At 55 to 63 the chain is on the cytoplasmic side; sequence LGFRMRRNA. Residues 64 to 84 form a helical membrane-spanning segment; it reads FSVYVLSLAGADFLFLCFPMI. The Extracellular portion of the chain corresponds to 85–96; the sequence is NCLEYLINFFHS. Residues 97–117 traverse the membrane as a helical segment; the sequence is ISINFPSFFTTVMTCAYLAGL. Residues 118-144 lie on the Cytoplasmic side of the membrane; the sequence is SMLSAISTERCLSVLWPIWYRCRRPRH. The chain crosses the membrane as a helical span at residues 145–165; the sequence is LSAVLCVLLWALSLLLSILEG. Over 166 to 184 the chain is Extracellular; sequence KFCGLLFSDGDSGWCQTFD. The helical transmembrane segment at 185–205 threads the bilayer; it reads FITAAWLMFLFVVLCGSSLAL. Residues 206–228 lie on the Cytoplasmic side of the membrane; sequence LVRILCGSQGLPLTRLYLTILLT. Residues 229-249 traverse the membrane as a helical segment; that stretch reads VLIFLLCGLPFGIQWFLILWI. The Extracellular portion of the chain corresponds to 250–264; sequence WKNSDVLFCHIHPVS. A helical membrane pass occupies residues 265-285; that stretch reads VVLSSFNSSANPIIYFFVGSF. At 286–330 the chain is on the cytoplasmic side; sequence RKQWRLRQPVLKLALQRALQDTAEVDHSEGCFSQGTLEMSGSSLV.

This sequence belongs to the G-protein coupled receptor 1 family. Mas subfamily.

It is found in the cell membrane. Its function is as follows. Mast cell-specific receptor for basic secretagogues, i.e. cationic amphiphilic drugs, as well as endo- or exogenous peptides, consisting of a basic head group and a hydrophobic core. Recognizes and binds small molecules containing a cyclized tetrahydroisoquinoline (THIQ), such as non-steroidal neuromuscular blocking drugs (NMBDs), including tubocurarine and atracurium. In response to these compounds, mediates pseudo-allergic reactions characterized by histamine release, inflammation and airway contraction. This is Mas-related G-protein coupled receptor member X2 (MRGPRX2) from Rhinopithecus bieti (Black snub-nosed monkey).